The following is a 511-amino-acid chain: V-type proton ATPase subunit B (511 aa).

Arg-381 contacts ATP. The tract at residues 484–511 (FYGRDREQDDDEEEEEDPDKSGDKLIDA) is disordered. A compositionally biased stretch (acidic residues) spans 491-501 (QDDDEEEEEDP). The span at 502 to 511 (DKSGDKLIDA) shows a compositional bias: basic and acidic residues.

Belongs to the ATPase alpha/beta chains family. As to quaternary structure, V-ATPase is a heteromultimeric enzyme composed of a peripheral catalytic V1 complex (components A to H) attached to an integral membrane V0 proton pore complex (components: a, c, c', c'', d, e, f and VOA1).

The protein resides in the vacuole membrane. Its function is as follows. Non-catalytic subunit of the V1 complex of vacuolar(H+)-ATPase (V-ATPase), a multisubunit enzyme composed of a peripheral complex (V1) that hydrolyzes ATP and a membrane integral complex (V0) that translocates protons. V-ATPase is responsible for acidifying and maintaining the pH of intracellular compartments. The protein is V-type proton ATPase subunit B (VMA2) of Candida tropicalis (Yeast).